A 400-amino-acid polypeptide reads, in one-letter code: Haptoglobin (400 aa).

Positions 1 to 18 (MSALPVVVTLLLCGQLLA) are cleaved as a signal peptide. 2 Sushi domains span residues 28–83 (DSCP…ECED) and 84–141 (ASCP…ECEA). 3 cysteine pairs are disulfide-bonded: Cys-49–Cys-81, Cys-105–Cys-139, and Cys-143–Cys-260. The Peptidase S1 domain occupies 156 to 398 (IIGGSLDAKG…ILDWVRKTIA (243 aa)). 3 N-linked (GlcNAc...) asparagine glycosylation sites follow: Asn-285, Asn-309, and Asn-315. 2 cysteine pairs are disulfide-bonded: Cys-303–Cys-334 and Cys-345–Cys-375. The segment at 312–317 (VPENKT) is interaction with CD163.

Belongs to the peptidase S1 family. Tetramer of two alpha and two beta chains; disulfide-linked. The hemoglobin/haptoglobin complex is composed of a haptoglobin dimer bound to two hemoglobin alpha-beta dimers. Interacts with CD163. Interacts with ERGIC3. In terms of tissue distribution, expressed by the liver and secreted in plasma.

The protein resides in the secreted. The protein localises to the extracellular space. As a result of hemolysis, hemoglobin is found to accumulate in the kidney and is secreted in the urine. Haptoglobin captures, and combines with free plasma hemoglobin to allow hepatic recycling of heme iron and to prevent kidney damage. Haptoglobin also acts as an antioxidant, has antibacterial activity and plays a role in modulating many aspects of the acute phase response. Hemoglobin/haptoglobin complexes are rapidly cleared by the macrophage CD163 scavenger receptor expressed on the surface of liver Kupfer cells through an endocytic lysosomal degradation pathway. The sequence is that of Haptoglobin (HP) from Cervus elaphus (Red deer).